The chain runs to 1167 residues: Phenyloxazoline synthase MbtB (1167 aa).

A Carrier 1 domain is found at 2-78 (EAVVTSSQTV…AWTRLVGERT (77 aa)). Residue serine 39 is modified to O-(pantetheine 4'-phosphoryl)serine. The segment at 78–100 (TAESPGAATQSGDTAASAGDPDA) is disordered. The condensation/cyclization stretch occupies residues 98-390 (PDAPFPLAPI…SSLMLDVDFT (293 aa)). Positions 575 to 967 (TYAELRERVL…RIAGVEAAVA (393 aa)) are adenylation. Residues 1054 to 1130 (VPSTALERAL…ALARRLVDHE (77 aa)) enclose the Carrier 2 domain. Serine 1089 carries the post-translational modification O-(pantetheine 4'-phosphoryl)serine.

Belongs to the ATP-dependent AMP-binding enzyme family. MbtB subfamily. The cofactor is pantetheine 4'-phosphate. Post-translationally, 4'-phosphopantetheine is transferred from CoA to a specific serine in each of the two carrier protein domains, leading to their activation from apo to holo forms.

The protein operates within siderophore biosynthesis; mycobactin biosynthesis. Its function is as follows. Involved in the initial steps of the mycobactin biosynthetic pathway. Putatively couples activated salicylic acid with serine or threonine and cyclizes this precursor to the hydroxyphenyloxazoline ring system present in this class of siderophores. This chain is Phenyloxazoline synthase MbtB (mbtB), found in Mycobacterium sp. (strain MCS).